Reading from the N-terminus, the 222-residue chain is Thiamine-phosphate synthase (222 aa).

4-amino-2-methyl-5-(diphosphooxymethyl)pyrimidine is bound by residues 44-48 (QVRMK) and asparagine 75. Mg(2+) is bound by residues aspartate 76 and aspartate 95. Residue threonine 114 coordinates 4-amino-2-methyl-5-(diphosphooxymethyl)pyrimidine. 140 to 142 (SRS) contributes to the 2-[(2R,5Z)-2-carboxy-4-methylthiazol-5(2H)-ylidene]ethyl phosphate binding site. A 4-amino-2-methyl-5-(diphosphooxymethyl)pyrimidine-binding site is contributed by lysine 143. Glycine 171 serves as a coordination point for 2-[(2R,5Z)-2-carboxy-4-methylthiazol-5(2H)-ylidene]ethyl phosphate.

Belongs to the thiamine-phosphate synthase family. The cofactor is Mg(2+).

The catalysed reaction is 2-[(2R,5Z)-2-carboxy-4-methylthiazol-5(2H)-ylidene]ethyl phosphate + 4-amino-2-methyl-5-(diphosphooxymethyl)pyrimidine + 2 H(+) = thiamine phosphate + CO2 + diphosphate. The enzyme catalyses 2-(2-carboxy-4-methylthiazol-5-yl)ethyl phosphate + 4-amino-2-methyl-5-(diphosphooxymethyl)pyrimidine + 2 H(+) = thiamine phosphate + CO2 + diphosphate. It catalyses the reaction 4-methyl-5-(2-phosphooxyethyl)-thiazole + 4-amino-2-methyl-5-(diphosphooxymethyl)pyrimidine + H(+) = thiamine phosphate + diphosphate. It participates in cofactor biosynthesis; thiamine diphosphate biosynthesis; thiamine phosphate from 4-amino-2-methyl-5-diphosphomethylpyrimidine and 4-methyl-5-(2-phosphoethyl)-thiazole: step 1/1. Condenses 4-methyl-5-(beta-hydroxyethyl)thiazole monophosphate (THZ-P) and 2-methyl-4-amino-5-hydroxymethyl pyrimidine pyrophosphate (HMP-PP) to form thiamine monophosphate (TMP). This Anaeromyxobacter dehalogenans (strain 2CP-C) protein is Thiamine-phosphate synthase.